Reading from the N-terminus, the 406-residue chain is Argininosuccinate synthase (406 aa).

Residues 12-20 and alanine 39 each bind ATP; that span reads AYSGGLDTS. L-citrulline is bound by residues tyrosine 90 and serine 95. Glycine 120 serves as a coordination point for ATP. Positions 122, 126, and 127 each coordinate L-aspartate. Asparagine 126 is a binding site for L-citrulline. Residues arginine 130, serine 179, serine 188, glutamate 264, and tyrosine 276 each contribute to the L-citrulline site.

This sequence belongs to the argininosuccinate synthase family. Type 1 subfamily. In terms of assembly, homotetramer.

It localises to the cytoplasm. It catalyses the reaction L-citrulline + L-aspartate + ATP = 2-(N(omega)-L-arginino)succinate + AMP + diphosphate + H(+). The protein operates within amino-acid biosynthesis; L-arginine biosynthesis; L-arginine from L-ornithine and carbamoyl phosphate: step 2/3. This chain is Argininosuccinate synthase, found in Geobacter sp. (strain M21).